Here is a 143-residue protein sequence, read N- to C-terminus: Anti-sigma F factor (143 aa).

Belongs to the anti-sigma-factor family.

The enzyme catalyses L-seryl-[protein] + ATP = O-phospho-L-seryl-[protein] + ADP + H(+). It catalyses the reaction L-threonyl-[protein] + ATP = O-phospho-L-threonyl-[protein] + ADP + H(+). In terms of biological role, binds to sigma F and blocks its ability to form an RNA polymerase holoenzyme (E-sigma F). Phosphorylates SpoIIAA on a serine residue. This phosphorylation may enable SpoIIAA to act as an anti-anti-sigma factor that counteracts SpoIIAB and thus releases sigma F from inhibition. In Clostridium novyi (strain NT), this protein is Anti-sigma F factor.